Here is a 152-residue protein sequence, read N- to C-terminus: Large ribosomal subunit protein bL9 (152 aa).

This sequence belongs to the bacterial ribosomal protein bL9 family.

Its function is as follows. Binds to the 23S rRNA. This is Large ribosomal subunit protein bL9 from Coxiella burnetii (strain RSA 331 / Henzerling II).